The primary structure comprises 525 residues: 2-isopropylmalate synthase (525 aa).

The Pyruvate carboxyltransferase domain occupies 5 to 267 (VIIFDTTLRD…HTGIHHQEIY (263 aa)). Aspartate 14, histidine 202, histidine 204, and asparagine 238 together coordinate Mn(2+). The segment at 392–525 (RLEYFSVQSS…NNSQDMQETV (134 aa)) is regulatory domain.

It belongs to the alpha-IPM synthase/homocitrate synthase family. LeuA type 1 subfamily. Homodimer. Mn(2+) is required as a cofactor.

Its subcellular location is the cytoplasm. It catalyses the reaction 3-methyl-2-oxobutanoate + acetyl-CoA + H2O = (2S)-2-isopropylmalate + CoA + H(+). The protein operates within amino-acid biosynthesis; L-leucine biosynthesis; L-leucine from 3-methyl-2-oxobutanoate: step 1/4. Its function is as follows. Catalyzes the condensation of the acetyl group of acetyl-CoA with 3-methyl-2-oxobutanoate (2-ketoisovalerate) to form 3-carboxy-3-hydroxy-4-methylpentanoate (2-isopropylmalate). The protein is 2-isopropylmalate synthase of Sodalis glossinidius (strain morsitans).